The sequence spans 237 residues: Bax inhibitor 1 (237 aa).

At 1–29 (MNIFDRKINFDALLKFSHITPSTQQHLKK) the chain is on the cytoplasmic side. Lys7 participates in a covalent cross-link: Glycyl lysine isopeptide (Lys-Gly) (interchain with G-Cter in ubiquitin). A helical transmembrane segment spans residues 30-50 (VYASFALCMFVAAAGAYVHMV). Residues 51–52 (TH) are Lumenal-facing. Residues 53–73 (FIQAGLLSALGSLILMIWLMA) traverse the membrane as a helical segment. The Cytoplasmic segment spans residues 74–86 (TPHSHETEQKRLG). Residues 87-107 (LLAGFAFLTGVGLGPALEFCI) form a helical membrane-spanning segment. Residues 108–112 (AVNPS) are Lumenal-facing. A helical membrane pass occupies residues 113 to 133 (ILPTAFMGTAMIFTCFTLSAL). Residues 134 to 139 (YARRRS) lie on the Cytoplasmic side of the membrane. Residues 140–160 (YLFLGGILMSALSLLLLSSLG) traverse the membrane as a helical segment. The Lumenal segment spans residues 161-166 (NVFFGS). A helical membrane pass occupies residues 167-187 (IWLFQANLYVGLVVMCGFVLF). Topologically, residues 188 to 206 (DTQLIIEKAEHGDQDYIWH) are cytoplasmic. The helical intramembrane region spans 207–227 (CIDLFLDFITVFRKLMMILAM). The Cytoplasmic segment spans residues 228-237 (NEKDKKKEKK).

Belongs to the BI1 family. Interacts with BCL2 and BCL2L1. Interacts with ERN1. Post-translationally, ubiquitinated by BFAR, leading to proteasomal degradation. Highly abundant in testis.

It is found in the endoplasmic reticulum membrane. Endoplasmic reticulum (ER)-resident protein that confers cellular protection as an anti-apoptotic protein by limiting multiple stress-inducing pathways surrounding the endoplasmic reticulum and mitochondria. Inhibits the activities of the key sensor for the endoplasmic reticulum unfolded protein response IRE1alpha/ERN1 both directly and by blocking BAX/BAK binding. Modulates ER calcium homeostasis by acting as a calcium-leak channel. Negatively regulates autophagy and autophagosome formation, especially during periods of nutrient deprivation, and reduces cell survival during starvation. The chain is Bax inhibitor 1 (TMBIM6) from Homo sapiens (Human).